The following is a 541-amino-acid chain: ATP synthase subunit beta (541 aa).

Positions 1 to 65 (MAKAVTSSKG…TPVKKEERAK (65 aa)) are disordered. 2 stretches are compositionally biased toward basic and acidic residues: residues 25–36 (VKKDASKSKDAS) and 52–65 (AAKD…ERAK). 214–221 (GGAGVGKT) contacts ATP.

This sequence belongs to the ATPase alpha/beta chains family. F-type ATPases have 2 components, CF(1) - the catalytic core - and CF(0) - the membrane proton channel. CF(1) has five subunits: alpha(3), beta(3), gamma(1), delta(1), epsilon(1). CF(0) has three main subunits: a(1), b(2) and c(9-12). The alpha and beta chains form an alternating ring which encloses part of the gamma chain. CF(1) is attached to CF(0) by a central stalk formed by the gamma and epsilon chains, while a peripheral stalk is formed by the delta and b chains.

The protein localises to the cell inner membrane. The catalysed reaction is ATP + H2O + 4 H(+)(in) = ADP + phosphate + 5 H(+)(out). In terms of biological role, produces ATP from ADP in the presence of a proton gradient across the membrane. The catalytic sites are hosted primarily by the beta subunits. The chain is ATP synthase subunit beta from Bartonella tribocorum (strain CIP 105476 / IBS 506).